The primary structure comprises 83 residues: U4-theraphotoxin-Hhn1x (83 aa).

Positions 1–20 (MTLIAILTCAAALVLHTTAA) are cleaved as a signal peptide. A propeptide spanning residues 21–46 (EELEAESQLMEVGMPDTELEAVDEER) is cleaved from the precursor. 3 disulfides stabilise this stretch: Cys-50–Cys-64, Cys-54–Cys-75, and Cys-69–Cys-80.

Belongs to the neurotoxin 12 (Hwtx-2) family. 02 (Hwtx-2) subfamily. As to expression, expressed by the venom gland.

It localises to the secreted. Postsynaptic neurotoxin. The sequence is that of U4-theraphotoxin-Hhn1x from Cyriopagopus hainanus (Chinese bird spider).